Here is a 281-residue protein sequence, read N- to C-terminus: Voltage-dependent L-type calcium channel subunit alpha-1S (281 aa).

Residues 1–8 (VGFVIVTF) form an III repeat. A dihydropyridine binding region spans residues 1–17 (VGFVIVTFQEQGESEYK). One copy of the IV repeat lies at 45–281 (NPYQYQIWYV…TCGTGFAYFY (237 aa)). The helical transmembrane segment at 59-80 (YFEYLMFFLIMLNTICLGMQHY) threads the bilayer. Residue N81 is glycosylated (N-linked (GlcNAc...) asparagine). The chain crosses the membrane as a helical span at residues 89 to 110 (VSDILNVAFTVLFTLEMILKLM). The chain crosses the membrane as a helical span at residues 121 to 140 (PWNVFDFLIVIGSIIDVILS). The chain crosses the membrane as a helical span at residues 153–171 (ITFFRLFRVMRLVKLLSRG). Residues 190-210 (YVALLIVMLFFIYAVIGMQMF) form a helical membrane-spanning segment. Residues 233 to 251 (AVLLLFRCATGEAWQEILL) constitute an intramembrane region (pore-forming). A Selectivity filter of repeat IV motif is present at residues 242–245 (TGEA). The interval 258-281 (RCDPESDYAEGEEYTCGTGFAYFY) is dihydropyridine binding. An intrachain disulfide couples C259 to C273. The segment at 270–281 (EYTCGTGFAYFY) is phenylalkylamine binding.

The protein belongs to the calcium channel alpha-1 subunit (TC 1.A.1.11) family. CACNA1S subfamily. As to quaternary structure, component of a calcium channel complex consisting of a pore-forming alpha subunit (CACNA1S) and the ancillary subunits CACNB1 or CACNB2, CACNG1 and CACNA2D1. The channel complex contains alpha, beta, gamma and delta subunits in a 1:1:1:1 ratio, i.e. it contains either CACNB1 or CACNB2. CACNA1S channel activity is modulated by the auxiliary subunits (CACNB1 or CACNB2, CACNG1 and CACNA2D1). Interacts with DYSF and JSRP1. Interacts with RYR1. Interacts with CALM. The alpha-1S subunit is found in two isoforms in the skeletal muscle: a minor form of 212 kDa containing the complete amino acid sequence, and a major form of 190 kDa derived from the full-length form by post-translational proteolysis close to Phe-1690. Post-translationally, both the minor and major forms are phosphorylated in vitro by PKA. Phosphorylation by PKA activates the calcium channel.

It is found in the cell membrane. It localises to the sarcolemma. The protein localises to the T-tubule. The enzyme catalyses Ca(2+)(in) = Ca(2+)(out). With respect to regulation, channel activity is blocked by dihydropyridines (DHP), phenylalkylamines, and by benzothiazepines. Pore-forming, alpha-1S subunit of the voltage-gated calcium channel that gives rise to L-type calcium currents in skeletal muscle. Calcium channels containing the alpha-1S subunit play an important role in excitation-contraction coupling in skeletal muscle via their interaction with RYR1, which triggers Ca(2+) release from the sarcplasmic reticulum and ultimately results in muscle contraction. Long-lasting (L-type) calcium channels belong to the 'high-voltage activated' (HVA) group. This Gallus gallus (Chicken) protein is Voltage-dependent L-type calcium channel subunit alpha-1S (CACNA1S).